The following is a 240-amino-acid chain: Sugar fermentation stimulation protein homolog (240 aa).

Belongs to the SfsA family.

The protein is Sugar fermentation stimulation protein homolog of Saccharolobus islandicus (strain M.14.25 / Kamchatka #1) (Sulfolobus islandicus).